The chain runs to 357 residues: (4E)-oxalomesaconate Delta-isomerase (357 aa).

The protein belongs to the PrpF family.

The enzyme catalyses (1E)-4-oxobut-1-ene-1,2,4-tricarboxylate = (3Z)-2-oxo-4-carboxy-3-hexenedioate. It functions in the pathway secondary metabolite metabolism; lignin degradation. Functionally, contributes to the degradation of lignin at the level of the protocatechuate 4,5-cleavage pathway. Catalyzes the isomerization of the double bond between C4 and C5 in (4E)-oxalomesaconate (OMA) to (3Z)-2-keto-4-carboxy-3-hexenedioate (KCH), where the double bond has migrated between C3 and C4 via a 1,3-allylic isomerization. This chain is (4E)-oxalomesaconate Delta-isomerase, found in Novosphingobium sp. (strain KA1) (Sphingomonas sp. (strain KA1)).